Reading from the N-terminus, the 275-residue chain is C-type lectin domain family 12 member B (275 aa).

At 1 to 41 (MSDEVTYATLMLQDSARVRGNQDGNNLRKEGHPAQSSLWRG) the chain is on the cytoplasmic side. An ITIM motif motif is present at residues 5–10 (VTYATL). Position 7 is a phosphotyrosine (Tyr7). A helical; Signal-anchor for type II membrane protein membrane pass occupies residues 42 to 64 (AALSLMTLCLVLVTGLVTLATMF). The Extracellular segment spans residues 65-275 (LQVSNDINSD…ASLVKTEDLD (211 aa)). N-linked (GlcNAc...) asparagine glycans are attached at residues Asn91, Asn175, and Asn236. The C-type lectin domain maps to 149 to 263 (YGNSCYYFSI…CSAEIPWICE (115 aa)). 2 cysteine pairs are disulfide-bonded: Cys171-Cys262 and Cys241-Cys254.

As to quaternary structure, homodimer. Interacts (via ITIM motif) with PTPN6. Interacts (via ITIM motif) with PTPN11; this interaction triggers dephosphorylation and activation of PTPN11.

The protein localises to the cell membrane. In terms of biological role, inhibitory receptor postulated to negatively regulate immune and non-immune functions. Upon phosphorylation, recruits SH2 domain-containing PTPN6 and PTPN11 phosphatases to its ITIM motif and antagonizes activation signals. Although it inhibits KLRK1/NKG2D-mediated signaling, it does not bind known ligands of KLRK1/NKG2D and therefore is not its inhibitory counterpart. May limit activation of myeloid cell subsets in response to infection or tissue inflammation. May protect target cells against natural killer cell-mediated lysis. May negatively regulate cell cycle and differentiation of melanocytes via inactivation of STAT3. The chain is C-type lectin domain family 12 member B (Clec12b) from Mus musculus (Mouse).